Consider the following 262-residue polypeptide: Type III pantothenate kinase (262 aa).

6–13 (DVGNTNAV) provides a ligand contact to ATP. Substrate is bound by residues tyrosine 100 and 107 to 110 (GADR). The active-site Proton acceptor is aspartate 109. Aspartate 129 is a binding site for K(+). Threonine 132 serves as a coordination point for ATP. Threonine 184 is a substrate binding site.

Belongs to the type III pantothenate kinase family. Homodimer. NH4(+) serves as cofactor. It depends on K(+) as a cofactor.

It localises to the cytoplasm. It carries out the reaction (R)-pantothenate + ATP = (R)-4'-phosphopantothenate + ADP + H(+). Its pathway is cofactor biosynthesis; coenzyme A biosynthesis; CoA from (R)-pantothenate: step 1/5. Catalyzes the phosphorylation of pantothenate (Pan), the first step in CoA biosynthesis. The sequence is that of Type III pantothenate kinase from Bacillus cytotoxicus (strain DSM 22905 / CIP 110041 / 391-98 / NVH 391-98).